Consider the following 1387-residue polypeptide: Mediator of RNA polymerase II transcription subunit 13 (1387 aa).

3 disordered regions span residues 81 to 102 (ELNN…PEFS), 354 to 400 (HSAN…ESYS), and 620 to 676 (SVNS…DIPM). 2 stretches are compositionally biased toward polar residues: residues 354–367 (HSAN…STGE) and 390–400 (SRQNFPTESYS).

Belongs to the Mediator complex subunit 13 family. In terms of assembly, component of the SRB8-11 complex, which itself associates with the Mediator complex.

It is found in the nucleus. In terms of biological role, component of the SRB8-11 complex. The SRB8-11 complex is a regulatory module of the Mediator complex which is itself involved in regulation of basal and activated RNA polymerase II-dependent transcription. The SRB8-11 complex may be involved in the transcriptional repression of a subset of genes regulated by Mediator. It may inhibit the association of the Mediator complex with RNA polymerase II to form the holoenzyme complex. In Kluyveromyces lactis (strain ATCC 8585 / CBS 2359 / DSM 70799 / NBRC 1267 / NRRL Y-1140 / WM37) (Yeast), this protein is Mediator of RNA polymerase II transcription subunit 13 (SSN2).